The primary structure comprises 174 residues: Trypsin inhibitor (174 aa).

Disulfide bonds link cysteine 40–cysteine 86 and cysteine 131–cysteine 140.

The protein belongs to the protease inhibitor I3 (leguminous Kunitz-type inhibitor) family. In terms of assembly, heterodimer of an alpha and a beta chain linked by a disulfide bond.

Inhibits trypsin and chymotrypsin with a 1:1 stoichiometry, with dissociation constants of 1.56 nM and 120 nM respectively. Inhibits plasma kallikrein, factor XIIa and plasmin with dissociation constants of 5.0 nM, 150 nM and 18 nM respectively. Does not inhibit factor Xa, thrombin, tissue kallikrein or cysteine proteinases such as papain and bromelain. This is Trypsin inhibitor from Enterolobium contortisiliquum (Pacara earpod tree).